The chain runs to 258 residues: Sec-independent protein translocase protein TatC (258 aa).

The Cytoplasmic segment spans residues 2 to 23 (SVEDTQPLITHLIELRKRLLNC). A helical membrane pass occupies residues 24 to 44 (IISVIVIFLCLVYFANDIYHL). Topologically, residues 45-75 (VSAPLIKQLPQGSTMIATDVASPFFTPIKLT) are periplasmic. A helical transmembrane segment spans residues 76–96 (FMVSLILSAPVILYQVWAFIA). Topologically, residues 97 to 115 (PALYKHERRLVVPLLVSSS) are cytoplasmic. A helical transmembrane segment spans residues 116–136 (LLFYIGMAFAYFVVFPLAFGF). The Periplasmic segment spans residues 137–156 (LANTAPEGVQVSTDIASYLS). Residues 157-177 (FVMALFMAFGVSFEVPVAIVL) traverse the membrane as a helical segment. The Cytoplasmic portion of the chain corresponds to 178-192 (LCWMGITSPEDLRKK). A helical transmembrane segment spans residues 193–210 (RPYVLVGAFVVGMLLTPP). D211 is a topological domain (periplasmic). Residues 212-232 (VFSQTLLAIPMYCLFEIGVFF) traverse the membrane as a helical segment. At 233–258 (SRFYVGKGRNREEENDAEAESEKTEE) the chain is on the cytoplasmic side.

This sequence belongs to the TatC family. The Tat system comprises two distinct complexes: a TatABC complex, containing multiple copies of TatA, TatB and TatC subunits, and a separate TatA complex, containing only TatA subunits. Substrates initially bind to the TatABC complex, which probably triggers association of the separate TatA complex to form the active translocon.

It is found in the cell inner membrane. In terms of biological role, part of the twin-arginine translocation (Tat) system that transports large folded proteins containing a characteristic twin-arginine motif in their signal peptide across membranes. Together with TatB, TatC is part of a receptor directly interacting with Tat signal peptides. The protein is Sec-independent protein translocase protein TatC of Escherichia coli O6:H1 (strain CFT073 / ATCC 700928 / UPEC).